The chain runs to 119 residues: Large ribosomal subunit protein uL22 (119 aa).

This sequence belongs to the universal ribosomal protein uL22 family. Part of the 50S ribosomal subunit.

This protein binds specifically to 23S rRNA; its binding is stimulated by other ribosomal proteins, e.g. L4, L17, and L20. It is important during the early stages of 50S assembly. It makes multiple contacts with different domains of the 23S rRNA in the assembled 50S subunit and ribosome. Functionally, the globular domain of the protein is located near the polypeptide exit tunnel on the outside of the subunit, while an extended beta-hairpin is found that lines the wall of the exit tunnel in the center of the 70S ribosome. The sequence is that of Large ribosomal subunit protein uL22 from Bifidobacterium animalis subsp. lactis (strain AD011).